Consider the following 473-residue polypeptide: Cell division protein FtsP (473 aa).

Residues 1–27 (MSFSRRQFIQVSGLAMCIGAAPLLVRA) constitute a signal peptide (tat-type signal).

It belongs to the FtsP family. Post-translationally, predicted to be exported by the Tat system. The position of the signal peptide cleavage has not been experimentally proven.

The protein resides in the periplasm. Cell division protein that is required for growth during stress conditions. May be involved in protecting or stabilizing the divisomal assembly under conditions of stress. The protein is Cell division protein FtsP of Photorhabdus laumondii subsp. laumondii (strain DSM 15139 / CIP 105565 / TT01) (Photorhabdus luminescens subsp. laumondii).